Reading from the N-terminus, the 299-residue chain is NAD kinase (299 aa).

The active-site Proton acceptor is Asp71. NAD(+)-binding positions include 71–72 (DG), 145–146 (ND), Arg173, Asp175, 186–191 (TAYSLS), Ala210, and Gln248.

This sequence belongs to the NAD kinase family. A divalent metal cation serves as cofactor.

It is found in the cytoplasm. The catalysed reaction is NAD(+) + ATP = ADP + NADP(+) + H(+). Functionally, involved in the regulation of the intracellular balance of NAD and NADP, and is a key enzyme in the biosynthesis of NADP. Catalyzes specifically the phosphorylation on 2'-hydroxyl of the adenosine moiety of NAD to yield NADP. The sequence is that of NAD kinase from Bordetella bronchiseptica (strain ATCC BAA-588 / NCTC 13252 / RB50) (Alcaligenes bronchisepticus).